Consider the following 591-residue polypeptide: Vomeromodulin (591 aa).

The signal sequence occupies residues 1–18 (MWVLQALAIMLSIQAGTL). A disordered region spans residues 151–172 (NEGNGDSSKPSSGSKATGGLGQ). 2 N-linked (GlcNAc...) asparagine glycosylation sites follow: Asn421 and Asn516.

Post-translationally, N-glycosylated. The N-glycans consist mainly of complex sialylated and fucosylated biantennary structures. Expressed in lung. Not detected in other tissues tested (at protein level).

The protein localises to the secreted. The polypeptide is Vomeromodulin (Mus musculus (Mouse)).